The chain runs to 394 residues: 1-deoxy-D-xylulose 5-phosphate reductoisomerase (394 aa).

6 residues coordinate NADPH: Thr14, Gly15, Ser16, Ile17, Gly40, and Asn128. Position 129 (Lys129) interacts with 1-deoxy-D-xylulose 5-phosphate. Glu130 provides a ligand contact to NADPH. Asp154 is a Mn(2+) binding site. 1-deoxy-D-xylulose 5-phosphate-binding residues include Ser155, Glu156, Ser180, and His203. Residue Glu156 participates in Mn(2+) binding. NADPH is bound at residue Gly209. Residues Ser216, Asn221, Lys222, and Glu225 each contribute to the 1-deoxy-D-xylulose 5-phosphate site. Glu225 contributes to the Mn(2+) binding site.

It belongs to the DXR family. Mg(2+) serves as cofactor. Requires Mn(2+) as cofactor.

It carries out the reaction 2-C-methyl-D-erythritol 4-phosphate + NADP(+) = 1-deoxy-D-xylulose 5-phosphate + NADPH + H(+). Its pathway is isoprenoid biosynthesis; isopentenyl diphosphate biosynthesis via DXP pathway; isopentenyl diphosphate from 1-deoxy-D-xylulose 5-phosphate: step 1/6. Functionally, catalyzes the NADPH-dependent rearrangement and reduction of 1-deoxy-D-xylulose-5-phosphate (DXP) to 2-C-methyl-D-erythritol 4-phosphate (MEP). In Xylella fastidiosa (strain M23), this protein is 1-deoxy-D-xylulose 5-phosphate reductoisomerase.